Here is a 132-residue protein sequence, read N- to C-terminus: Phosphoribosyl-AMP cyclohydrolase (132 aa).

Aspartate 82 is a binding site for Mg(2+). Residue cysteine 83 coordinates Zn(2+). Aspartate 84 and aspartate 86 together coordinate Mg(2+). Zn(2+)-binding residues include cysteine 100 and cysteine 107.

The protein belongs to the PRA-CH family. Homodimer. Mg(2+) serves as cofactor. It depends on Zn(2+) as a cofactor.

It is found in the cytoplasm. The catalysed reaction is 1-(5-phospho-beta-D-ribosyl)-5'-AMP + H2O = 1-(5-phospho-beta-D-ribosyl)-5-[(5-phospho-beta-D-ribosylamino)methylideneamino]imidazole-4-carboxamide. It participates in amino-acid biosynthesis; L-histidine biosynthesis; L-histidine from 5-phospho-alpha-D-ribose 1-diphosphate: step 3/9. Catalyzes the hydrolysis of the adenine ring of phosphoribosyl-AMP. The protein is Phosphoribosyl-AMP cyclohydrolase of Dechloromonas aromatica (strain RCB).